A 49-amino-acid polypeptide reads, in one-letter code: Large ribosomal subunit protein bL33A (49 aa).

It belongs to the bacterial ribosomal protein bL33 family.

The chain is Large ribosomal subunit protein bL33A from Geobacillus thermodenitrificans (strain NG80-2).